The primary structure comprises 530 residues: Inactive ubiquitin carboxyl-terminal hydrolase 17-like protein 8 (530 aa).

The 296-residue stretch at 80-375 folds into the USP domain; that stretch reads AGLQNMGNTC…QAYVLFYIQK (296 aa). A compositionally biased stretch (basic and acidic residues) spans 382-392; that stretch reads SESVSRGREPR. Disordered regions lie at residues 382 to 412 and 493 to 530; these read SESVSRGREPRALGAEDTDRPATQGELKRDH and NSTDQESMNTGTLASLQGRTRRSKGKNKHSKRSLLVCQ. Positions 495 to 510 are enriched in polar residues; it reads TDQESMNTGTLASLQG. The span at 511–524 shows a compositional bias: basic residues; the sequence is RTRRSKGKNKHSKR.

Belongs to the peptidase C19 family. USP17 subfamily.

The protein resides in the nucleus. It is found in the endoplasmic reticulum. This Homo sapiens (Human) protein is Inactive ubiquitin carboxyl-terminal hydrolase 17-like protein 8 (USP17L8).